The sequence spans 219 residues: N-(5'-phosphoribosyl)anthranilate isomerase (219 aa).

It belongs to the TrpF family.

It carries out the reaction N-(5-phospho-beta-D-ribosyl)anthranilate = 1-(2-carboxyphenylamino)-1-deoxy-D-ribulose 5-phosphate. It functions in the pathway amino-acid biosynthesis; L-tryptophan biosynthesis; L-tryptophan from chorismate: step 3/5. The chain is N-(5'-phosphoribosyl)anthranilate isomerase from Bradyrhizobium sp. (strain ORS 278).